Here is a 444-residue protein sequence, read N- to C-terminus: Putative zinc metalloprotease PD_0327 (444 aa).

H22 contributes to the Zn(2+) binding site. E23 is a catalytic residue. Residue H26 coordinates Zn(2+). The chain crosses the membrane as a helical span at residues 98-120 (IAIVAAGPLANLLLCMLLLWVLF). The region spanning 192–278 (TLELSKLKQP…HPGMIEIRRG (87 aa)) is the PDZ domain. 2 helical membrane passes run 371–393 (VGWF…LFPI) and 418–440 (AMAA…AFYN).

The protein belongs to the peptidase M50B family. The cofactor is Zn(2+).

It localises to the cell inner membrane. The protein is Putative zinc metalloprotease PD_0327 of Xylella fastidiosa (strain Temecula1 / ATCC 700964).